The following is a 122-amino-acid chain: MIQQETRLKVADNSGARSLLCIRVLGGSKRRSAGIGDVIVASVKEATPGGAVKKGDVVRAVVVRTKKETRREDGSYIRFGENAGVLINSDGSPRGTRIFGPVARELREKGYTRIISLAPEVL.

Belongs to the universal ribosomal protein uL14 family. Part of the 50S ribosomal subunit. Forms a cluster with proteins L3 and L19. In the 70S ribosome, L14 and L19 interact and together make contacts with the 16S rRNA in bridges B5 and B8.

In terms of biological role, binds to 23S rRNA. Forms part of two intersubunit bridges in the 70S ribosome. The polypeptide is Large ribosomal subunit protein uL14 (Rubrobacter xylanophilus (strain DSM 9941 / JCM 11954 / NBRC 16129 / PRD-1)).